The primary structure comprises 32 residues: Cytochrome b6-f complex subunit 7 (32 aa).

Residues 5–25 (IFTVAGVMWALVLTGLSVGFG) traverse the membrane as a helical segment.

This sequence belongs to the PetM family. The 4 large subunits of the cytochrome b6-f complex are cytochrome b6, subunit IV (17 kDa polypeptide, PetD), cytochrome f and the Rieske protein, while the 4 small subunits are PetG, PetL, PetM and PetN. The complex functions as a dimer.

The protein localises to the plastid. It is found in the chloroplast thylakoid membrane. Component of the cytochrome b6-f complex, which mediates electron transfer between photosystem II (PSII) and photosystem I (PSI), cyclic electron flow around PSI, and state transitions. The sequence is that of Cytochrome b6-f complex subunit 7 from Emiliania huxleyi (Coccolithophore).